The sequence spans 1046 residues: Toluene efflux pump membrane transporter TtgE (1046 aa).

12 consecutive transmembrane segments (helical) span residues 10–30 (IFAWVLAIIAMLAGALSLTKM), 339–359 (SVVHTILEAVVLVFLVMFLFL), 370–390 (LAVPVVLLAAFALLPYFGISI), 392–412 (VLTMYAMVLAIGLLVDDAIVV), 440–460 (GALVGIGMVLSAVFVPMAFFG), 470–490 (FAVTIVICMSLSVLVALIFTP), 542–562 (LIFALITAGTGYLFTQIPKAF), 871–891 (APMLYALTVLIVFLCLAALYE), 895–915 (VPMSVILVVPLGIFGAVLATL), 927–947 (VGLMTTVGLSAKNAILIIEFA), 973–993 (IIMTSLAFTFGVLPMARATGA), and 1008–1028 (GMITATVLAVFFVPLFYVVVV).

This sequence belongs to the resistance-nodulation-cell division (RND) (TC 2.A.6) family.

It localises to the cell inner membrane. In terms of biological role, the inner membrane transporter component of an inducible organic solvent efflux pump. Involved in export of toluene and styrene but not of m-xylene, propylbenzene or ethylbenzene. Is not involved in antibiotic or AMP efflux. This is Toluene efflux pump membrane transporter TtgE (ttgE) from Pseudomonas putida (strain DOT-T1E).